Here is a 59-residue protein sequence, read N- to C-terminus: Large ribosomal subunit protein uL30 (59 aa).

It belongs to the universal ribosomal protein uL30 family. Part of the 50S ribosomal subunit.

The polypeptide is Large ribosomal subunit protein uL30 (Herminiimonas arsenicoxydans).